The chain runs to 213 residues: High frequency lysogenization protein HflD homolog (213 aa).

Residues 79–126 adopt a coiled-coil conformation; the sequence is QGLNAELTRYTLSLMVLERKLSSAKGALDTLGNRINGLQRQLEHFDLQ.

Belongs to the HflD family.

Its subcellular location is the cytoplasm. The protein resides in the cell inner membrane. This Shigella flexneri serotype 5b (strain 8401) protein is High frequency lysogenization protein HflD homolog.